The sequence spans 452 residues: tRNA-2-methylthio-N(6)-dimethylallyladenosine synthase (452 aa).

In terms of domain architecture, MTTase N-terminal spans 16-134; sequence KRFFISTWGC…LPEYIERVKT (119 aa). C25, C61, C95, C171, C175, and C178 together coordinate [4Fe-4S] cluster. In terms of domain architecture, Radical SAM core spans 157–387; that stretch reads RKSDIKAFVT…VEAVNEIMAR (231 aa). Positions 390 to 452 constitute a TRAM domain; sequence KEFEGKTVEV…NSFSLTGEII (63 aa).

The protein belongs to the methylthiotransferase family. MiaB subfamily. As to quaternary structure, monomer. [4Fe-4S] cluster is required as a cofactor.

The protein localises to the cytoplasm. The enzyme catalyses N(6)-dimethylallyladenosine(37) in tRNA + (sulfur carrier)-SH + AH2 + 2 S-adenosyl-L-methionine = 2-methylsulfanyl-N(6)-dimethylallyladenosine(37) in tRNA + (sulfur carrier)-H + 5'-deoxyadenosine + L-methionine + A + S-adenosyl-L-homocysteine + 2 H(+). Its function is as follows. Catalyzes the methylthiolation of N6-(dimethylallyl)adenosine (i(6)A), leading to the formation of 2-methylthio-N6-(dimethylallyl)adenosine (ms(2)i(6)A) at position 37 in tRNAs that read codons beginning with uridine. The protein is tRNA-2-methylthio-N(6)-dimethylallyladenosine synthase of Clostridium novyi (strain NT).